The primary structure comprises 164 residues: Peptide methionine sulfoxide reductase MsrA (164 aa).

The active site involves Cys-16.

It belongs to the MsrA Met sulfoxide reductase family.

It carries out the reaction L-methionyl-[protein] + [thioredoxin]-disulfide + H2O = L-methionyl-(S)-S-oxide-[protein] + [thioredoxin]-dithiol. It catalyses the reaction [thioredoxin]-disulfide + L-methionine + H2O = L-methionine (S)-S-oxide + [thioredoxin]-dithiol. In terms of biological role, has an important function as a repair enzyme for proteins that have been inactivated by oxidation. Catalyzes the reversible oxidation-reduction of methionine sulfoxide in proteins to methionine. The sequence is that of Peptide methionine sulfoxide reductase MsrA from Clostridium tetani (strain Massachusetts / E88).